The following is a 503-amino-acid chain: Probable cytosol aminopeptidase (503 aa).

The Mn(2+) site is built by Lys268 and Asp273. The active site involves Lys280. Mn(2+) contacts are provided by Asp291, Asp350, and Glu352. Arg354 is a catalytic residue.

Belongs to the peptidase M17 family. Requires Mn(2+) as cofactor.

It is found in the cytoplasm. It catalyses the reaction Release of an N-terminal amino acid, Xaa-|-Yaa-, in which Xaa is preferably Leu, but may be other amino acids including Pro although not Arg or Lys, and Yaa may be Pro. Amino acid amides and methyl esters are also readily hydrolyzed, but rates on arylamides are exceedingly low.. It carries out the reaction Release of an N-terminal amino acid, preferentially leucine, but not glutamic or aspartic acids.. In terms of biological role, presumably involved in the processing and regular turnover of intracellular proteins. Catalyzes the removal of unsubstituted N-terminal amino acids from various peptides. This Herminiimonas arsenicoxydans protein is Probable cytosol aminopeptidase.